The sequence spans 581 residues: Zinc finger protein 674 (581 aa).

In terms of domain architecture, KRAB spans 8–79 (LTFKDVFVDF…DGGTPVRTCA (72 aa)). 4 C2H2-type zinc fingers span residues 224–246 (YKCT…QRTH), 252–274 (YECC…QRTH), 280–302 (YECS…QRTH), and 308–330 (FVCD…EKTH). The span at 357–371 (PQCSEHGKASDEKPS) shows a compositional bias: basic and acidic residues. Residues 357-377 (PQCSEHGKASDEKPSPTKHWR) are disordered. 7 C2H2-type zinc fingers span residues 385-407 (YECS…QRIH), 413-435 (YECS…HRTH), 441-463 (YECR…QRMH), 469-491 (YKCN…QRIH), 497-519 (YECT…QRIH), 525-547 (YKCS…HRTH), and 553-575 (YECR…QRSH).

The protein belongs to the krueppel C2H2-type zinc-finger protein family. As to expression, expressed in testis.

It is found in the nucleus. In terms of biological role, may be involved in transcriptional regulation. In Homo sapiens (Human), this protein is Zinc finger protein 674 (ZNF674).